Here is an 856-residue protein sequence, read N- to C-terminus: Paladin (856 aa).

A compositionally biased stretch (low complexity) spans 1-16 (MGTTASTAQQTVSAGT). The segment at 1 to 29 (MGTTASTAQQTVSAGTPFEGLQGSGTMDS) is disordered. Glycine 2 carries N-myristoyl glycine lipidation. Serine 86 carries the phosphoserine modification.

Belongs to the paladin family. In terms of tissue distribution, expressed in endothelial cells, and in certain larger vessels, in mural cells. In the brain, possibly expressed in microglia. Expressed in peripheral blood mononuclear cells (at protein level).

The protein localises to the cytoplasm. It localises to the cytosol. The chain is Paladin (PALD1) from Homo sapiens (Human).